Consider the following 378-residue polypeptide: Septin-5 (378 aa).

The region spanning 50–323 (KGFDFTLMVA…ENYRAHCIQQ (274 aa)) is the Septin-type G domain. Positions 60–67 (GESGLGKS) are G1 motif. GTP is bound by residues 60–67 (GESGLGKS), threonine 94, and glycine 120. The G3 motif stretch occupies residues 117-120 (DTPG). Arginine 177 is subject to Omega-N-methylarginine. Residues 198–201 (AKAD) are G4 motif. 199-207 (KADCLVPSE) contacts GTP. The residue at position 234 (serine 234) is a Phosphoserine. Glycine 257 and arginine 272 together coordinate GTP. Serine 336 carries the phosphoserine modification. Position 345 is a phosphothreonine (threonine 345). The stretch at 347 to 378 (DAETEKLIRMKDEELRRMQEMLQRMKQQMQDQ) forms a coiled coil.

The protein belongs to the TRAFAC class TrmE-Era-EngA-EngB-Septin-like GTPase superfamily. Septin GTPase family. In terms of assembly, septins polymerize into heterooligomeric protein complexes that form filaments, and can associate with cellular membranes, actin filaments and microtubules. GTPase activity is required for filament formation. Interacts with SEPTIN2 and SEPTIN5. In platelets, associated with a complex containing STX4. Interacts with PRKN; this interaction leads to SEPTIN5 ubiquitination and degradation. Interacts with DYRK1A. Interacts with STX1A; in the cerebellar cortex. In terms of processing, phosphorylated by DYRK1A.

The protein localises to the cytoplasm. The protein resides in the cytoskeleton. Its function is as follows. Filament-forming cytoskeletal GTPase. May play a role in cytokinesis (Potential). May play a role in platelet secretion. This is Septin-5 from Macaca fascicularis (Crab-eating macaque).